Consider the following 364-residue polypeptide: DNA replication and repair protein RecF (364 aa).

Residue 30–37 (GANGSGKT) coordinates ATP.

Belongs to the RecF family.

It localises to the cytoplasm. In terms of biological role, the RecF protein is involved in DNA metabolism; it is required for DNA replication and normal SOS inducibility. RecF binds preferentially to single-stranded, linear DNA. It also seems to bind ATP. This Sodalis glossinidius protein is DNA replication and repair protein RecF.